A 202-amino-acid chain; its full sequence is Amelogenin (202 aa).

The residue at position 16 (Ser-16) is a Phosphoserine. The tract at residues 77–202 is disordered; that stretch reads QPAPPQQPVM…TDKTKREEVD (126 aa). The segment covering 78-87 has biased composition (pro residues); the sequence is PAPPQQPVMP. A compositionally biased stretch (low complexity) spans 101–112; the sequence is QPNLPQPGQQPY. Residues 113–125 are compositionally biased toward pro residues; that stretch reads QPQPAQQPQPHQP. Over residues 126 to 158 the composition is skewed to low complexity; sequence IQPIQPIQPIQPMQPMQPMQPMQPMQPMQPQTP. Residues 164–176 show a composition bias toward pro residues; sequence PLPPQPPLPPMFP.

The protein belongs to the amelogenin family.

It is found in the secreted. The protein localises to the extracellular space. It localises to the extracellular matrix. In terms of biological role, plays a role in the biomineralization of teeth. Seems to regulate the formation of crystallites during the secretory stage of tooth enamel development. Thought to play a major role in the structural organization and mineralization of developing enamel. This is Amelogenin (AMEL) from Monodelphis domestica (Gray short-tailed opossum).